The chain runs to 665 residues: DNA ligase (665 aa).

NAD(+) contacts are provided by residues 35–39, 88–89, and glutamate 117; these read DAIYD and SL. The active-site N6-AMP-lysine intermediate is the lysine 119. The NAD(+) site is built by arginine 140, glutamate 174, lysine 290, and lysine 314. Cysteine 406, cysteine 409, cysteine 424, and cysteine 429 together coordinate Zn(2+). The BRCT domain maps to 588–665; it reads KKTERFAQLS…EEAFNELLVS (78 aa).

This sequence belongs to the NAD-dependent DNA ligase family. LigA subfamily. Mg(2+) serves as cofactor. The cofactor is Mn(2+).

It carries out the reaction NAD(+) + (deoxyribonucleotide)n-3'-hydroxyl + 5'-phospho-(deoxyribonucleotide)m = (deoxyribonucleotide)n+m + AMP + beta-nicotinamide D-nucleotide.. Its function is as follows. DNA ligase that catalyzes the formation of phosphodiester linkages between 5'-phosphoryl and 3'-hydroxyl groups in double-stranded DNA using NAD as a coenzyme and as the energy source for the reaction. It is essential for DNA replication and repair of damaged DNA. This chain is DNA ligase, found in Metamycoplasma arthritidis (strain 158L3-1) (Mycoplasma arthritidis).